Here is a 601-residue protein sequence, read N- to C-terminus: DNA topoisomerase I, mitochondrial (601 aa).

Residues 1 to 50 (MRVVRLLRLRAALTLLGEVPRRPASRGVPGSRRTQKGSGARWEKEKHEDG) constitute a mitochondrion transit peptide. The interval 22–48 (RPASRGVPGSRRTQKGSGARWEKEKHE) is disordered. 3 interaction with DNA regions span residues 261 to 262 (KY), 324 to 329 (RAGNEK), and 421 to 423 (TAK). The Topo IB-type catalytic domain occupies 268–601 (CSKLKGETAW…LAMAGEDFEF (334 aa)). Residue Tyr559 is the O-(3'-phospho-DNA)-tyrosine intermediate of the active site.

The protein belongs to the type IB topoisomerase family. It depends on Ca(2+) as a cofactor. Mg(2+) is required as a cofactor.

Its subcellular location is the mitochondrion. The enzyme catalyses ATP-independent breakage of single-stranded DNA, followed by passage and rejoining.. Its function is as follows. Releases the supercoiling and torsional tension of DNA introduced during duplication of mitochondrial DNA by transiently cleaving and rejoining one strand of the DNA duplex. Introduces a single-strand break via transesterification at a target site in duplex DNA. The scissile phosphodiester is attacked by the catalytic tyrosine of the enzyme, resulting in the formation of a DNA-(3'-phosphotyrosyl)-enzyme intermediate and the expulsion of a 5'-OH DNA strand. The free DNA strand then rotates around the intact phosphodiester bond on the opposing strand, thus removing DNA supercoils. Finally, in the religation step, the DNA 5'-OH attacks the covalent intermediate to expel the active-site tyrosine and restore the DNA phosphodiester backbone. This Pan troglodytes (Chimpanzee) protein is DNA topoisomerase I, mitochondrial (TOP1MT).